The sequence spans 536 residues: T-complex protein 1 subunit delta (536 aa).

The interval Met1–Val21 is disordered.

This sequence belongs to the TCP-1 chaperonin family. Heterooligomeric complex of about 850 to 900 kDa that forms two stacked rings, 12 to 16 nm in diameter.

The protein localises to the cytoplasm. Molecular chaperone; assists the folding of proteins upon ATP hydrolysis. Known to play a role, in vitro, in the folding of actin and tubulin. The polypeptide is T-complex protein 1 subunit delta (Arabidopsis thaliana (Mouse-ear cress)).